Consider the following 49-residue polypeptide: Large ribosomal subunit protein bL33A (49 aa).

Belongs to the bacterial ribosomal protein bL33 family.

The chain is Large ribosomal subunit protein bL33A from Bacillus pumilus (strain SAFR-032).